Reading from the N-terminus, the 267-residue chain is X-box-binding protein 1 (267 aa).

Residues 1–180 (MVVVAAAPSA…VQAQLSPPQN (180 aa)) lie on the Cytoplasmic side of the membrane. Positions 35 to 56 (VPGPRAAGSEASGTPQARKRQR) are disordered. The residue at position 61 (serine 61) is a Phosphoserine. Positions 63–126 (EEKALRRKLK…HGLVVENQEL (64 aa)) constitute a bZIP domain. The tract at residues 65–87 (KALRRKLKNRVAAQTARDRKKAR) is basic motif. The nuclear localization signal (NLS) stretch occupies residues 69–85 (RKLKNRVAAQTARDRKK). The leucine-zipper stretch occupies residues 91-126 (LEQQVVDLEEENHKLQLENQLLREKTHGLVVENQEL). The helical; Signal-anchor for type II membrane protein transmembrane segment at 181-198 (IFPWTLTLLPLQILSLIS) threads the bilayer. Topologically, residues 199–267 (FWAFWTSWTL…FVLTMYTPSL (69 aa)) are lumenal. The segment at 230–256 (QKDLVPYQPPFLCQWGPHQPSWKPLMN) is necessary for the translational pausing of its own mRNA.

This sequence belongs to the bZIP family. In terms of assembly, isoform 1 interacts with HM13. Isoform 1 interacts with RNF139; the interaction induces ubiquitination and degradation of isoform 1. Isoform 1 interacts (via luminal domain) with DERL1; the interaction obviates the need for ectodomain shedding prior HM13/SPP-mediated XBP1 isoform 1 cleavage. Isoform 1 interacts with isoform 2; the interaction sequesters isoform 2 from the nucleus and enhances isoform 2 degradation in the cytoplasm. Isoform 1 interacts with HDAC3 and AKT1; the interactions occur in endothelial cell (EC) under disturbed flow. Isoform 1 interacts with the oncoprotein FOS. Isoform 2 interacts with ATF6; the interaction occurs in a ER stress-dependent manner and is required for DNA binding to the unfolded protein response element (UPRE). Isoform 2 interacts with PIK3R1; the interaction is direct and induces translocation of XBP1 isoform 2 into the nucleus and the unfolded protein response (UPR) XBP1-dependent target genes activation in a ER stress- and/or insulin-dependent but PI3K-independent manner. Isoform 2 interacts with SIRT1. Isoform 2 interacts with PIK3R1 and PIK3R2; the interactions are direct and induce translocation of XBP1 isoform 2 into the nucleus and the unfolded protein response (UPR) XBP1-dependent target genes activation in a ER stress- and/or insulin-dependent but PI3K-independent manner. Isoform 2 interacts with FOXO1; the interaction is direct and leads to FOXO1 ubiquitination and degradation via the proteasome pathway in hepatocytes. Acetylated by EP300; acetylation positively regulates the transcriptional activity of XBP1 isoform 2. Isoform 2 is deacetylated by SIRT1; deacetylation negatively regulates the transcriptional activity of XBP1 isoform 2. Post-translationally, ubiquitinated, leading to proteasomal degradation in response to ER stress. In terms of processing, X-box-binding protein 1, cytoplasmic form and luminal form are produced by intramembrane proteolytic cleavage of ER membrane-anchored isoform 1 triggered by HM13/SPP in a DERL1-RNF139-dependent and VCP/p97-independent manner. X-box-binding protein 1, luminal form is ubiquitinated leading to proteasomal degradation. Isoform 1 and isoform 2 are expressed at higher level in branch curves of vessel walls and in atherosclerotic plaques relative to healthy segments of the same aortas (at protein level). Expressed in skeletal muscles, plasma cells and pancreatic beta cells. Isoform 1 and isoform 2 are expressed in gonadal adipose tissue. Isoform 1 is expressed in inguinal adipose tissue.

It is found in the endoplasmic reticulum. Its subcellular location is the nucleus. The protein resides in the cytoplasm. It localises to the endoplasmic reticulum membrane. The protein localises to the membrane. In terms of biological role, functions as a transcription factor during endoplasmic reticulum stress by regulating the unfolded protein response (UPR). Required for cardiac myogenesis and hepatogenesis during embryonic development and the development of secretory tissues such as exocrine pancreas and salivary gland. Involved in differentiation of B lymphocytes to plasma cells and production of immunoglobulins. Modulates the cellular response to ER stress in a PIK3R-dependent manner. Binds to the cis-acting X box present in the promoter regions of major histocompatibility complex class II genes. Involved in VEGF-induced endothelial cell (EC) proliferation and retinal blood vessel formation during embryonic development but also for angiogenesis in adult tissues under ischemic conditions. Also functions as a major regulator of the UPR in obesity-induced insulin resistance and type 2 diabetes for the management of obesity and diabetes prevention. Functionally, plays a role in the unconventional cytoplasmic splicing processing of its own mRNA triggered by the endoplasmic reticulum (ER) transmembrane endoribonuclease ERN1: upon ER stress, the emerging XBP1 polypeptide chain, as part of a mRNA-ribosome-nascent chain (R-RNC) complex, cotranslationally recruits its own unprocessed mRNA through transient docking to the ER membrane and translational pausing, therefore facilitating efficient IRE1-mediated XBP1 mRNA isoform 2 production. In endothelial cells (EC), associated with KDR, promotes IRE1-mediated XBP1 mRNA isoform 2 production in a vascular endothelial growth factor (VEGF)-dependent manner, leading to EC proliferation and angiogenesis. Functions as a negative feed-back regulator of the potent transcription factor XBP1 isoform 2 protein levels through proteasome-mediated degradation, thus preventing the constitutive activation of the ER stress response signaling pathway. Inhibits the transactivation activity of XBP1 isoform 2 in myeloma cells. Acts as a weak transcriptional factor. Together with HDAC3, contributes to the activation of NFE2L2-mediated HMOX1 transcription factor gene expression in a PI(3)K/mTORC2/Akt-dependent signaling pathway leading to EC survival under disturbed flow/oxidative stress. Binds to the ER stress response element (ERSE) upon ER stress. Binds to the consensus 5'-GATGACGTG[TG]N(3)[AT]T-3' sequence related to cAMP responsive element (CRE)-like sequences. Binds the Tax-responsive element (TRE) present in the long terminal repeat (LTR) of T-cell leukemia virus type 1 (HTLV-I) and to the TPA response elements (TRE). Associates preferentially to the HDAC3 gene promoter region in a static flow-dependent manner. Binds to the CDH5/VE-cadherin gene promoter region. Functions as a stress-inducible potent transcriptional activator during endoplasmic reticulum (ER) stress by inducing unfolded protein response (UPR) target genes via binding to the UPR element (UPRE). Up-regulates target genes encoding ER chaperones and ER-associated degradation (ERAD) components to enhance the capacity of productive folding and degradation mechanism, respectively, in order to maintain the homeostasis of the ER under ER stress. Plays a role in the production of immunoglobulins and interleukin-6 in the presence of stimuli required for plasma cell differentiation, and promotes as well membrane phospholipid biosynthesis necessary for ER expansion. Contributes to the VEGF-induced endothelial cell (EC) growth and proliferation in a Akt/GSK-dependent and/or -independent signaling pathway, respectively, leading to beta-catenin nuclear translocation and E2F2 gene expression. Promotes umbilical vein EC apoptosis and atherosclerotisis development in a caspase-dependent signaling pathway, and contributes to VEGF-induced EC proliferation and angiogenesis in adult tissues under ischemic conditions. Involved in the regulation of endostatin-induced autophagy in EC through BECN1 transcriptional activation. Plays a role as an oncogene by promoting tumor progression: stimulates zinc finger protein SNAI1 transcription to induce epithelial-to-mesenchymal (EMT) transition, cell migration and invasion of breast cancer cells. Involved in adipocyte differentiation by regulating lipogenic gene expression during lactation. Plays a role in the survival of both dopaminergic neurons of the substantia nigra pars compacta (SNpc), by maintaining protein homeostasis and of myeloma cells. Increases insulin sensitivity in the liver as a response to a high carbohydrate diet, resulting in improved glucose tolerance. Also improves glucose homeostasis in an ER stress- and/or insulin-independent manner through both binding and proteasome-induced degradation of the transcription factor FOXO1, hence resulting in suppression of gluconeogenic genes expression and in a reduction of blood glucose levels. Controls the induction of de novo fatty acid synthesis in hepatocytes by regulating the expression of a subset of lipogenic genes in an ER stress- and UPR-independent manner. Binds to the 5'-CCACG-3' motif in the PPARG promoter. Associates preferentially to the HDAC3 gene promoter region in a disturbed flow-dependent manner. Binds to the BECN1 gene promoter region. Binds to the CDH5/VE-cadherin gene promoter region. Binds to the ER stress response element (ERSE) upon ER stress. This chain is X-box-binding protein 1, found in Mus musculus (Mouse).